The primary structure comprises 611 residues: Protein decapping 5 (611 aa).

Positions 9–92 (KSSSAADSYV…IKDLQVKASP (84 aa)) constitute a Sm domain. Disordered stretches follow at residues 111-153 (HYPS…AMPL), 183-238 (GLPQ…PSSL), 264-301 (SSSL…PTLP), 318-362 (EAST…DKPK), 396-455 (QVSS…AGRS), and 519-611 (FFDS…NRTT). Polar residues-rich tracts occupy residues 117–140 (PTSG…NGQP) and 203–214 (NSLQQPLQYPNF). Residues 264-281 (SSSLQSTLQSAPSPSLAS) are compositionally biased toward low complexity. Composition is skewed to polar residues over residues 318–330 (EAST…NKPS), 396–413 (QVSS…TSEA), and 424–437 (ARPT…SFPN). Residues 441 to 453 (YRGRGRGRGRGAG) are compositionally biased toward basic residues. Positions 453-489 (GRSHQVMKFTEDFDFTAMNEKFNKDEVWGHLGKSTTL) constitute a DFDF domain. The FFD box signature appears at 512–527 (PVYNKDDFFDSLSSNT). The span at 528–547 (IDRESQNSRPRFSEQRKLDT) shows a compositional bias: basic and acidic residues. Positions 534–554 (NSRPRFSEQRKLDTETFGEFS) match the TFG box motif. Gly residues predominate over residues 559-604 (GRGGRGGYGRNNGYSRGGYGGRGYGGYGGRGGGGGGYGYGGRGQGR).

It belongs to the LSM14 family. As to quaternary structure, homodimer. Component of the decapping complex. Interacts with DCP1 and DCP2.

The protein resides in the cytoplasm. The protein localises to the P-body. Functionally, as a component of the decapping complex, involved in the degradation of mRNAs. Promotes P-body formation. Translational repressor. This Arabidopsis thaliana (Mouse-ear cress) protein is Protein decapping 5 (DCP5).